The primary structure comprises 297 residues: Aspartate carbamoyltransferase catalytic subunit (297 aa).

2 residues coordinate carbamoyl phosphate: Arg49 and Thr50. L-aspartate is bound at residue Lys77. Residues Arg99, His129, and Gln132 each coordinate carbamoyl phosphate. 2 residues coordinate L-aspartate: Arg162 and Arg215. Carbamoyl phosphate is bound by residues Gly256 and Pro257.

It belongs to the aspartate/ornithine carbamoyltransferase superfamily. ATCase family. As to quaternary structure, heterododecamer (2C3:3R2) of six catalytic PyrB chains organized as two trimers (C3), and six regulatory PyrI chains organized as three dimers (R2).

The catalysed reaction is carbamoyl phosphate + L-aspartate = N-carbamoyl-L-aspartate + phosphate + H(+). Its pathway is pyrimidine metabolism; UMP biosynthesis via de novo pathway; (S)-dihydroorotate from bicarbonate: step 2/3. Its function is as follows. Catalyzes the condensation of carbamoyl phosphate and aspartate to form carbamoyl aspartate and inorganic phosphate, the committed step in the de novo pyrimidine nucleotide biosynthesis pathway. The sequence is that of Aspartate carbamoyltransferase catalytic subunit from Legionella pneumophila (strain Paris).